Consider the following 466-residue polypeptide: Reticulophagy regulator 3 (466 aa).

At M1 to W80 the chain is on the cytoplasmic side. Position 26 is a phosphoserine (S26). The helical transmembrane segment at F81 to V101 threads the bilayer. At C102 to K168 the chain is on the lumenal side. A helical transmembrane segment spans residues F169–I187. The Cytoplasmic segment spans residues P188–L192. Residues S193 to L211 form a helical membrane-spanning segment. Residues W212–E381 are Lumenal-facing. Residues R244–E263 are disordered. Residues L248–D259 are compositionally biased toward basic and acidic residues. T254 is modified (phosphothreonine). A phosphoserine mark is found at S258 and S260. Residue T283 is modified to Phosphothreonine. Residues S285, S288, S293, and S303 each carry the phosphoserine modification. A disordered region spans residues S285–S335. Positions C294–T310 are enriched in polar residues. 2 positions are modified to phosphothreonine: T307 and T310. 3 positions are modified to phosphoserine: S313, S320, and S360. Residues L316–P331 show a composition bias toward basic and acidic residues. A helical membrane pass occupies residues L382–V401. Residues S402–H466 lie on the Cytoplasmic side of the membrane. A disordered region spans residues E412–G444. Phosphothreonine is present on T440. The short motif at D445–L450 is the LIR motif element.

The protein belongs to the RETREG family. As to quaternary structure, interacts with ATG8 family modifier proteins MAP1LC3A, MAP1LC3B, GABARAPL1 and GABARAPL2. Also interacts with ATG8 family modifier protein GABARAP. Interacts with CANX. Interacts with RTN4 isoform B. Widely expressed with highest levels in brain, lung, liver, muscle and spleen (protein level). Mainly expressed in the central nervous system and in parenchymatous organs including liver, lung and kidney.

It localises to the endoplasmic reticulum membrane. Endoplasmic reticulum (ER)-anchored autophagy regulator which exists in an inactive state under basal conditions but is activated following cellular stress. When activated, induces ER fragmentation and mediates ER delivery into lysosomes through sequestration into autophagosomes via interaction with ATG8 family proteins. Promotes ER membrane curvature and ER tubulation required for subsequent ER fragmentation and engulfment into autophagosomes. Required for collagen quality control in a LIR motif-dependent manner. Mediates NRF1-enhanced neurite outgrowth. This Mus musculus (Mouse) protein is Reticulophagy regulator 3 (Retreg3).